Here is a 391-residue protein sequence, read N- to C-terminus: Phosphoglycerate kinase (391 aa).

Substrate is bound by residues 21 to 23, Arg-36, 59 to 62, Arg-114, and Arg-147; these read DLN and HLGR. ATP-binding positions include Lys-198, Glu-315, and 344 to 347; that span reads GGDT.

It belongs to the phosphoglycerate kinase family. Monomer.

It is found in the cytoplasm. The catalysed reaction is (2R)-3-phosphoglycerate + ATP = (2R)-3-phospho-glyceroyl phosphate + ADP. It participates in carbohydrate degradation; glycolysis; pyruvate from D-glyceraldehyde 3-phosphate: step 2/5. This Actinobacillus succinogenes (strain ATCC 55618 / DSM 22257 / CCUG 43843 / 130Z) protein is Phosphoglycerate kinase.